We begin with the raw amino-acid sequence, 152 residues long: Deoxyuridine 5'-triphosphate nucleotidohydrolase (152 aa).

Residues 71-73, asparagine 84, 88-90, and methionine 98 contribute to the substrate site; these read RSG and LID.

The protein belongs to the dUTPase family. In terms of assembly, homotrimer. Mg(2+) serves as cofactor.

It carries out the reaction dUTP + H2O = dUMP + diphosphate + H(+). It functions in the pathway pyrimidine metabolism; dUMP biosynthesis; dUMP from dCTP (dUTP route): step 2/2. In terms of biological role, this enzyme is involved in nucleotide metabolism: it produces dUMP, the immediate precursor of thymidine nucleotides and it decreases the intracellular concentration of dUTP so that uracil cannot be incorporated into DNA. This chain is Deoxyuridine 5'-triphosphate nucleotidohydrolase, found in Escherichia coli O157:H7.